The following is a 355-amino-acid chain: Lipopolysaccharide heptosyltransferase 1 (355 aa).

ADP-L-glycero-beta-D-manno-heptose is bound by residues Thr-186, Thr-187, Lys-191, Glu-221, Asp-260, Thr-261, Gly-262, and His-265.

The protein belongs to the glycosyltransferase 9 family.

The protein resides in the cell inner membrane. It catalyses the reaction an alpha-Kdo-(2-&gt;4)-alpha-Kdo-(2-&gt;6)-lipid A + ADP-L-glycero-beta-D-manno-heptose = an L-alpha-D-Hep-(1-&gt;5)-[alpha-Kdo-(2-&gt;4)]-alpha-Kdo-(2-&gt;6)-lipid A + ADP + H(+). It participates in bacterial outer membrane biogenesis; LPS core biosynthesis. In terms of biological role, glycosyltransferase involved in the biosynthesis of the core oligosaccharide region of lipopolysaccharide (LPS). Catalyzes the addition of the first heptose unit to one 3-deoxy-D-manno-octulosonic acid (Kdo) residue of the Kdo2-lipid A module. This Pseudomonas aeruginosa (strain ATCC 15692 / DSM 22644 / CIP 104116 / JCM 14847 / LMG 12228 / 1C / PRS 101 / PAO1) protein is Lipopolysaccharide heptosyltransferase 1.